A 405-amino-acid chain; its full sequence is tRNA-specific 2-thiouridylase MnmA (405 aa).

Residues 41-48 (AMSGGVDS) and Leu-67 each bind ATP. Residue Cys-135 is the Nucleophile of the active site. A disulfide bridge connects residues Cys-135 and Cys-231. Gly-159 serves as a coordination point for ATP. Positions 181 to 183 (KDQ) are interaction with tRNA. Residue Cys-231 is the Cysteine persulfide intermediate of the active site.

This sequence belongs to the MnmA/TRMU family.

Its subcellular location is the cytoplasm. The catalysed reaction is S-sulfanyl-L-cysteinyl-[protein] + uridine(34) in tRNA + AH2 + ATP = 2-thiouridine(34) in tRNA + L-cysteinyl-[protein] + A + AMP + diphosphate + H(+). Functionally, catalyzes the 2-thiolation of uridine at the wobble position (U34) of tRNA, leading to the formation of s(2)U34. The polypeptide is tRNA-specific 2-thiouridylase MnmA (Maricaulis maris (strain MCS10) (Caulobacter maris)).